The chain runs to 1657 residues: Thrombospondin type-1 domain-containing protein 7A (1657 aa).

Residues 1 to 47 form the signal peptide; the sequence is MGLQARRWASGSRGAAGPRRGVLQLLPLPLPLPLLLLLLLRPGAGRA. Over 48–1607 the chain is Extracellular; that stretch reads AAQGEAEAPT…FGPDGRLKTW (1560 aa). 3 consecutive TSP type-1 domains span residues 57 to 116, 120 to 192, and 194 to 247; these read TLYL…KVCD, ELYD…IPCQ, and DCIV…SPCE. A glycan (N-linked (GlcNAc...) asparagine) is linked at N234. Residues 265 to 311 form a disordered region; sequence MPHSRQVRQARRRGKNKEREKDRSKGVKDPEARELIKKKRNRNRQNR. A coiled-coil region spans residues 267-315; it reads HSRQVRQARRRGKNKEREKDRSKGVKDPEARELIKKKRNRNRQNRQENK. Residues 269–280 are compositionally biased toward basic residues; it reads RQVRQARRRGKN. Over residues 281–299 the composition is skewed to basic and acidic residues; sequence KEREKDRSKGVKDPEAREL. Over residues 300 to 309 the composition is skewed to basic residues; sequence IKKKRNRNRQ. N-linked (GlcNAc...) asparagine glycosylation occurs at N332. TSP type-1 domains follow at residues 360–416, 423–510, 512–574, 634–695, 696–769, 771–831, 832–904, 906–959, 960–1033, 1035–1095, 1096–1163, 1166–1220, 1221–1284, 1286–1341, 1342–1412, and 1414–1475; these read ECQV…LSQG, ATYG…IPCP, ECEV…PACY, DCVL…HPCT, VYHW…LPCK, DCIV…QACQ, SYRW…IPCQ, DCQL…CPCD, KYNA…IPCP, DCKL…SDCN, QYLW…LPCP, CVIS…KNCY, HYDY…VECP, NCQL…KPCY, RWQY…QPCP, and DCYL…GQCY. 3 cysteine pairs are disulfide-bonded: C435-C505, C455-C509, and C466-C494. N-linked (GlcNAc...) asparagine glycosylation occurs at N450. An N-linked (GlcNAc...) asparagine glycan is attached at N500. 2 disulfides stabilise this stretch: C635–C677 and C646–C650. A glycan (N-linked (GlcNAc...) asparagine) is linked at N679. 7 disulfide bridges follow: C689–C694, C707–C764, C728–C768, C739–C752, C772–C814, C783–C787, and C824–C830. N717 carries N-linked (GlcNAc...) asparagine glycosylation. N-linked (GlcNAc...) asparagine glycosylation occurs at N968. Intrachain disulfides connect C972-C1028, C994-C1032, C1005-C1018, C1036-C1073, C1047-C1051, and C1090-C1094. N1043 carries N-linked (GlcNAc...) asparagine glycosylation. A glycan (N-linked (GlcNAc...) asparagine) is linked at N1182. The cysteines at positions 1213 and 1219 are disulfide-linked. The N-linked (GlcNAc...) asparagine glycan is linked to N1225. Cystine bridges form between C1232–C1279, C1240–C1283, C1251–C1264, C1287–C1325, C1298–C1302, C1335–C1340, C1351–C1407, C1358–C1411, C1369–C1388, C1415–C1459, C1426–C1430, and C1469–C1474. N1276 is a glycosylation site (N-linked (GlcNAc...) asparagine). The N-linked (GlcNAc...) asparagine glycan is linked to N1366. N-linked (GlcNAc...) asparagine glycosylation is found at N1500 and N1547. The tract at residues 1570 to 1591 is disordered; the sequence is DVKTSRAVHPTQPSSNPAGRGR. A helical transmembrane segment spans residues 1608-1628; the sequence is VYGVAAGAFVLLIFIVSMIYL. At 1629–1657 the chain is on the cytoplasmic side; that stretch reads ACKKPKKPQRRQNNRLKPLTLAYDGDADM.

Proteolytic cleavage in the extracellular region generates a 210 kDa soluble form. In terms of processing, extensively N-glycosylated. Detected on kidney podocytes along the glomerular capillary wall (at protein level).

It localises to the cell membrane. Its subcellular location is the cell projection. The protein resides in the secreted. Functionally, plays a role in actin cytoskeleton rearrangement. Its function is as follows. The soluble form promotes endothelial cell migration and filopodia formation during sprouting angiogenesis via a FAK-dependent mechanism. The sequence is that of Thrombospondin type-1 domain-containing protein 7A (THSD7A) from Homo sapiens (Human).